Consider the following 89-residue polypeptide: UPF0335 protein RPC_3979 (89 aa).

This sequence belongs to the UPF0335 family.

This chain is UPF0335 protein RPC_3979, found in Rhodopseudomonas palustris (strain BisB18).